The chain runs to 462 residues: MDYSYDEDLDELCPVCGDKVSGYHYGLLTCESCKGFFKRTVQNNKHYTCTESQSCKIDKTQRKRCPFCRFQKCLTVGMRLEAVRADRMRGGRNKFGPMYKRDRALKQQKKAQIRANGFKLETGPPMGVPPPPPPPPDYMLPPSLHAPEPKALVSGPPSGPLGDFGAPSLPMAVPGPHGPLAGYLYPAFSNRTIKSEYPEPYASPPQQPGPPYSYPEPFSGGPNVPELILQLLQLEPEEDQVRARIVGCLQEPAKSRPDQPAPFSLLCRMADQTFISIVDWARRCMVFKELEVADQMTLLQNCWSELLVLDHIYRQVQYGKEDSILLVTGQEVELSTVAVQAGSLLHSLVLRAQELVLQLHALQLDRQEFVCLKFLILFSLDVKFLNNHSLVKDAQEKANAALLDYTLCHYPHCGDKFQQLLLCLVEVRALSMQAKEYLYHKHLGNEMPRNNLLIEMLQAKQT.

The nuclear receptor DNA-binding region spans 10–85; the sequence is DELCPVCGDK…VGMRLEAVRA (76 aa). Residues 13–33 form an NR C4-type zinc finger; that stretch reads CPVCGDKVSGYHYGLLTCESC. N6-acetyllysine is present on residues K34, K38, and K72. The NR C4-type zinc finger occupies 49–73; sequence CTESQSCKIDKTQRKRCPFCRFQKC. Residues 117 to 149 are disordered; sequence GFKLETGPPMGVPPPPPPPPDYMLPPSLHAPEP. Residue K119 forms a Glycyl lysine isopeptide (Lys-Gly) (interchain with G-Cter in SUMO) linkage. The segment covering 126–139 has biased composition (pro residues); that stretch reads MGVPPPPPPPPDYM. K194 participates in a covalent cross-link: Glycyl lysine isopeptide (Lys-Gly) (interchain with G-Cter in SUMO). Residue S203 is modified to Phosphoserine; by CDK7. Positions 223 to 460 constitute an NR LBD domain; the sequence is NVPELILQLL…NLLIEMLQAK (238 aa). A 1,2-diacyl-sn-glycero-3-phosphocholine contacts are provided by G342, Y437, and K441.

Belongs to the nuclear hormone receptor family. NR5 subfamily. As to quaternary structure, binds DNA as a monomer. Part of a complex consisting of SFPQ, NONO and NR5A1. Interacts with NR0B2, NCOA2 and PPARGC1A. Interacts with DGKQ and CDK7. Binds to and activated by HIPK3. Post-translationally, acetylation stimulates the transcriptional activity. In terms of processing, sumoylation reduces CDK7-mediated phosphorylation on Ser-203. Phosphorylated on Ser-203 by CDK7. This phosphorylation promotes transcriptional activity.

It is found in the nucleus. In terms of biological role, transcriptional activator. Seems to be essential for sexual differentiation and formation of the primary steroidogenic tissues. Binds to the Ad4 site found in the promoter region of steroidogenic P450 genes such as CYP11A, CYP11B and CYP21B. Also regulates the AMH/Muellerian inhibiting substance gene as well as the AHCH and STAR genes. 5'-YCAAGGYC-3' and 5'-RRAGGTCA-3' are the consensus sequences for the recognition by NR5A1. The SFPQ-NONO-NR5A1 complex binds to the CYP17 promoter and regulates basal and cAMP-dependent transcriptional activity. Binds phosphatidylcholine and phospholipids with a phosphatidylinositol (PI) headgroup, in particular PI(3,4)P2 and PI(3,4,5)P3. Activated by the phosphorylation of NR5A1 by HIPK3 leading to increased steroidogenic gene expression upon cAMP signaling pathway stimulation. The protein is Steroidogenic factor 1 (Nr5a1) of Rattus norvegicus (Rat).